A 511-amino-acid chain; its full sequence is UDP-N-acetylhexosamine pyrophosphorylase-like protein 1 (511 aa).

Residues 1–19 (MDRSESAESAESRRRRAEE) are compositionally biased toward basic and acidic residues. A disordered region spans residues 1-22 (MDRSESAESAESRRRRAEESGQ). A Substrate binding motif is present at residues 117 to 120 (LAGG). UTP is bound by residues 117–120 (LAGG), lysine 131, glutamine 205, and glycine 231. Asparagine 232 contacts substrate. Aspartate 262 lines the UTP pocket. A Substrate binding motif is present at residues 312 to 313 (EY). Residue lysine 386 participates in UTP binding. A substrate-binding site is contributed by lysine 416.

It belongs to the UDPGP type 1 family.

The polypeptide is UDP-N-acetylhexosamine pyrophosphorylase-like protein 1 (uap1l1) (Xenopus tropicalis (Western clawed frog)).